Here is a 301-residue protein sequence, read N- to C-terminus: Quinolinate synthase (301 aa).

Iminosuccinate contacts are provided by His-21 and Ser-38. Position 83 (Cys-83) interacts with [4Fe-4S] cluster. Residues Tyr-109–Asn-111 and Ser-126 each bind iminosuccinate. Position 169 (Cys-169) interacts with [4Fe-4S] cluster. Iminosuccinate-binding positions include His-195 to Glu-197 and Thr-212. Residue Cys-257 coordinates [4Fe-4S] cluster.

It belongs to the quinolinate synthase family. Type 2 subfamily. [4Fe-4S] cluster serves as cofactor.

It is found in the cytoplasm. The enzyme catalyses iminosuccinate + dihydroxyacetone phosphate = quinolinate + phosphate + 2 H2O + H(+). Its pathway is cofactor biosynthesis; NAD(+) biosynthesis; quinolinate from iminoaspartate: step 1/1. Functionally, catalyzes the condensation of iminoaspartate with dihydroxyacetone phosphate to form quinolinate. This chain is Quinolinate synthase, found in Clostridium perfringens (strain SM101 / Type A).